The chain runs to 188 residues: Large ribosomal subunit protein bL35m (188 aa).

It belongs to the bacterial ribosomal protein bL35 family.

Its subcellular location is the mitochondrion. In Pongo abelii (Sumatran orangutan), this protein is Large ribosomal subunit protein bL35m (MRPL35).